The sequence spans 299 residues: MSSHPPHVIVLIGPTASGKTELAIEIAEYFKTNIHNIDSRQIYKSMDIGTAKPSKIQQKKIRHFLIDIEEPINPINVKQFQEIAQKSIKEEIKKDKLPFLVGGSGLYMNSITKGFFVPDVPPQNNLRKQLEELGQEKCWDLLENCDPLSTKKINFADHVRTIRALEVFYVTGKPLSTLKVQKPPNWKILELGLDRGNLKERIFQRTKNMFLSGIIDETNHLISKYGFDLPILETIGYREARNVLNNHSTIDKAIELTATKTIQFAKRQKTWFRNKNNPLWLNNKNPLKDAIIKIESFLS.

13–20 contacts ATP; it reads GPTASGKT. Residue 15–20 participates in substrate binding; the sequence is TASGKT. The interaction with substrate tRNA stretch occupies residues 38-41; sequence DSRQ.

This sequence belongs to the IPP transferase family. In terms of assembly, monomer. Mg(2+) serves as cofactor.

It catalyses the reaction adenosine(37) in tRNA + dimethylallyl diphosphate = N(6)-dimethylallyladenosine(37) in tRNA + diphosphate. In terms of biological role, catalyzes the transfer of a dimethylallyl group onto the adenine at position 37 in tRNAs that read codons beginning with uridine, leading to the formation of N6-(dimethylallyl)adenosine (i(6)A). The protein is tRNA dimethylallyltransferase of Prochlorococcus marinus (strain MIT 9301).